We begin with the raw amino-acid sequence, 545 residues long: Glucose-6-phosphate isomerase (545 aa).

Catalysis depends on glutamate 351, which acts as the Proton donor. Catalysis depends on residues histidine 382 and lysine 510.

Belongs to the GPI family.

The protein resides in the cytoplasm. The enzyme catalyses alpha-D-glucose 6-phosphate = beta-D-fructose 6-phosphate. It participates in carbohydrate biosynthesis; gluconeogenesis. It functions in the pathway carbohydrate degradation; glycolysis; D-glyceraldehyde 3-phosphate and glycerone phosphate from D-glucose: step 2/4. Functionally, catalyzes the reversible isomerization of glucose-6-phosphate to fructose-6-phosphate. The sequence is that of Glucose-6-phosphate isomerase from Shewanella baltica (strain OS223).